The sequence spans 208 residues: ATP phosphoribosyltransferase (208 aa).

Belongs to the ATP phosphoribosyltransferase family. Short subfamily. As to quaternary structure, heteromultimer composed of HisG and HisZ subunits.

It is found in the cytoplasm. It catalyses the reaction 1-(5-phospho-beta-D-ribosyl)-ATP + diphosphate = 5-phospho-alpha-D-ribose 1-diphosphate + ATP. The protein operates within amino-acid biosynthesis; L-histidine biosynthesis; L-histidine from 5-phospho-alpha-D-ribose 1-diphosphate: step 1/9. Catalyzes the condensation of ATP and 5-phosphoribose 1-diphosphate to form N'-(5'-phosphoribosyl)-ATP (PR-ATP). Has a crucial role in the pathway because the rate of histidine biosynthesis seems to be controlled primarily by regulation of HisG enzymatic activity. This chain is ATP phosphoribosyltransferase, found in Thermotoga neapolitana (strain ATCC 49049 / DSM 4359 / NBRC 107923 / NS-E).